An 85-amino-acid chain; its full sequence is Large ribosomal subunit protein bL27 (85 aa).

Residues 1–26 (MAHKKGVGSSRNGRDSNPKMLGVKRF) form a disordered region.

The protein belongs to the bacterial ribosomal protein bL27 family.

The protein is Large ribosomal subunit protein bL27 of Roseiflexus sp. (strain RS-1).